Here is a 124-residue protein sequence, read N- to C-terminus: Small ribosomal subunit protein uS12 (124 aa).

At D89 the chain carries 3-methylthioaspartic acid. The tract at residues 105 to 124 is disordered; it reads TGVDSRMQGRSKYGTKKPKK.

The protein belongs to the universal ribosomal protein uS12 family. In terms of assembly, part of the 30S ribosomal subunit. Contacts proteins S8 and S17. May interact with IF1 in the 30S initiation complex.

With S4 and S5 plays an important role in translational accuracy. In terms of biological role, interacts with and stabilizes bases of the 16S rRNA that are involved in tRNA selection in the A site and with the mRNA backbone. Located at the interface of the 30S and 50S subunits, it traverses the body of the 30S subunit contacting proteins on the other side and probably holding the rRNA structure together. The combined cluster of proteins S8, S12 and S17 appears to hold together the shoulder and platform of the 30S subunit. This is Small ribosomal subunit protein uS12 from Vesicomyosocius okutanii subsp. Calyptogena okutanii (strain HA).